A 267-amino-acid chain; its full sequence is Transmembrane protein 106B (267 aa).

Residues 1 to 92 (MGKALSHVAK…QRLRPRRTKL (92 aa)) are Cytoplasmic-facing. A helical membrane pass occupies residues 93 to 113 (YVMASVILCLLLCTLAVFFLF). Residues 114-267 (PRSIDVNYVG…EYSLNTPLTG (154 aa)) lie on the Lumenal side of the membrane. N-linked (GlcNAc...) asparagine glycosylation is found at asparagine 141, asparagine 147, asparagine 160, and asparagine 179. Cysteine 210 and cysteine 249 are joined by a disulfide. Residue asparagine 252 is glycosylated (N-linked (GlcNAc...) asparagine).

It belongs to the TMEM106 family.

Its subcellular location is the late endosome membrane. It localises to the lysosome membrane. It is found in the cell membrane. In terms of biological role, in neurons, involved in the transport of late endosomes/lysosomes. May be involved in dendrite morphogenesis and maintenance by regulating lysosomal trafficking. May act as a molecular brake for retrograde transport of late endosomes/lysosomes, possibly via its interaction with MAP6. In motoneurons, may mediate the axonal transport of lysosomes and axonal sorting at the initial segment. It remains unclear whether TMEM106B affects the transport of moving lysosomes in the anterograde or retrograde direction in neurites and whether it is particularly important in the sorting of lysosomes in axons or in dendrites. In neurons, may also play a role in the regulation of lysosomal size and responsiveness to stress. Required for proper lysosomal acidification. The chain is Transmembrane protein 106B (tmem106b) from Danio rerio (Zebrafish).